The sequence spans 171 residues: Sec-independent protein translocase protein TatB (171 aa).

The chain crosses the membrane as a helical span at residues 1–21 (MFDIGFSELLLVFIIGLVVLG). Positions 117-171 (KDNETAHEGVTPAAAQTQASSPEQKPETTPEPVVKPAADAEPKTAAPSPSSSDKP) are disordered. Positions 130–139 (AAQTQASSPE) are enriched in polar residues.

Belongs to the TatB family. As to quaternary structure, the Tat system comprises two distinct complexes: a TatABC complex, containing multiple copies of TatA, TatB and TatC subunits, and a separate TatA complex, containing only TatA subunits. Substrates initially bind to the TatABC complex, which probably triggers association of the separate TatA complex to form the active translocon.

The protein resides in the cell inner membrane. Part of the twin-arginine translocation (Tat) system that transports large folded proteins containing a characteristic twin-arginine motif in their signal peptide across membranes. Together with TatC, TatB is part of a receptor directly interacting with Tat signal peptides. TatB may form an oligomeric binding site that transiently accommodates folded Tat precursor proteins before their translocation. This is Sec-independent protein translocase protein TatB from Escherichia coli O6:K15:H31 (strain 536 / UPEC).